The sequence spans 53 residues: Conotoxin Cal6.27 (53 aa).

Residues 1–24 (MKLTCVLIAAMLLLAVCQLDSADA) form the signal peptide. 3 disulfides stabilise this stretch: Cys-29–Cys-43, Cys-36–Cys-47, and Cys-42–Cys-51.

Belongs to the conotoxin O1 superfamily. Expressed by the venom duct.

The protein localises to the secreted. Its function is as follows. Probable neurotoxin. The protein is Conotoxin Cal6.27 of Californiconus californicus (California cone).